The following is a 1447-amino-acid chain: MGARASVLSGGELDRWEKIRLRPGGKKKYKLKHIVWASRELERFAVNPGLLETSEGCRQILGQLQPSLQTGSEELRSLYNTVATLYCVHQRIEIKDTKEALDKIEEEQNKSKKKAQQAAADTGHSSQVSQNYPIVQNIQGQMVHQAISPRTLNAWVKVVEEKAFSPEVIPMFSALSEGATPQDLNTMLNTVGGHQAAMQMLKETINEEAAEWDRVHPVHAGPIAPGQMREPRGSDIAGTTSTLQEQIGWMTNNPPIPVGEIYKRWIILGLNKIVRMYSPTSILDIRQGPKEPFRDYVDRFYKTLRAEQASQEVKNWMTETLLVQNANPDCKTILKALGPAATLEEMMTACQGVGGPGHKARVLAEAMSQVTNSATIMMQRGNFRNQRKIVKCFNCGKEGHIARNCRAPRKKGCWKCGKEGHQMKDCTERQANFLREDLAFLQGKAREFSSEQTRANSPTISSEQTRANSPTRRELQVWGRDNNSLSEAGADRQGTVSFNFPQITLWQRPLVTIKIGGQLKEALLDTGADDTVLEEMSLPGRWKPKMIGGIGGFIKVRQYDQILIEICGHKAIGTVLVGPTPVNIIGRNLLTQIGCTLNFPISPIETVPVKLKPGMDGPKVKQWPLTEEKIKALVEICTEMEKEGKISKIGPENPYNTPVFAIKKKDSTKWRKLVDFRELNKRTQDFWEVQLGIPHPAGLKKKKSVTVLDVGDAYFSVPLDEDFRKYTAFTIPSINNETPGIRYQYNVLPQGWKGSPAIFQSSMTKILEPFRKQNPDIVIYQYMDDLYVGSDLEIGQHRTKIEELRQHLLRWGLTTPDKKHQKEPPFLWMGYELHPDKWTVQPIVLPEKDSWTVNDIQKLVGKLNWASQIYPGIKVRQLCKLLRGTKALTEVIPLTEEAELELAENREILKEPVHGVYYDPSKDLIAEIQKQGQGQWTYQIYQEPFKNLKTGKYARTRGAHTNDVKQLTEAVQKITTESIVIWGKTPKFKLPIQKETWETWWTEYWQATWIPEWEFVNTPPLVKLWYQLEKEPIVGAETFYVDGAASRETKLGKAGYVTNRGRQKVVTLTDTTNQKTELQAIHLALQDSGLEVNIVTDSQYALGIIQAQPDKSESELVNQIIEQLIKKEKVYLAWVPAHKGIGGNEQVDKLVSAGIRKVLFLDGIDKAQDEHEKYHSNWRAMASDFNLPPVVAKEIVASCDKCQLKGEAMHGQVDCSPGIWQLDCTHLEGKVILVAVHVASGYIEAEVIPAETGQETAYFLLKLAGRWPVKTIHTDNGSNFTSTTVKAACWWAGIKQEFGIPYNPQSQGVVESMNKELKKIIGQVRDQAEHLKTAVQMAVFIHNFKRKGGIGGYSAGERIVDIIATDIQTKELQKQITKIQNFRVYYRDSRDPLWKGPAKLLWKGEGAVVIQDNSDIKVVPRRKAKIIRDYGKQMAGDDCVASRQDED.

Glycine 2 carries N-myristoyl glycine; by host lipidation. Positions 7–31 (VLSGGELDRWEKIRLRPGGKKKYKL) are interaction with Gp41. The interval 8–43 (LSGGELDRWEKIRLRPGGKKKYKLKHIVWASRELER) is interaction with host CALM1. Residues 12-19 (ELDRWEKI) are interaction with host AP3D1. Residues 14-33 (DRWEKIRLRPGGKKKYKLKH) are interaction with membrane phosphatidylinositol 4,5-bisphosphate and RNA. The Nuclear export signal motif lies at 16–22 (WEKIRLR). Positions 26 to 32 (KKKYKLK) match the Nuclear localization signal motif. The interval 73–77 (EELRS) is interaction with membrane phosphatidylinositol 4,5-bisphosphate. The disordered stretch occupies residues 106-128 (EEQNKSKKKAQQAAADTGHSSQV). Position 132 is a phosphotyrosine; by host (tyrosine 132). An interaction with human PPIA/CYPA and NUP153 region spans residues 189–227 (NTVGGHQAAMQMLKETINEEAAEWDRVHPVHAGPIAPGQ). The dimerization/Multimerization of capsid protein p24 stretch occupies residues 277 to 363 (YSPTSILDIR…GGPGHKARVL (87 aa)). CCHC-type zinc fingers lie at residues 390–407 (VKCF…NCRA) and 411–428 (KGCW…DCTE). Positions 447-476 (EFSSEQTRANSPTISSEQTRANSPTRRELQ) are disordered. A compositionally biased stretch (polar residues) spans 450 to 470 (SEQTRANSPTISSEQTRANSP). The interval 501–505 (PQITL) is dimerization of protease. In terms of domain architecture, Peptidase A2 spans 520–589 (KEALLDTGAD…TPVNIIGRNL (70 aa)). Catalysis depends on aspartate 525, which acts as the For protease activity; shared with dimeric partner. Dimerization of protease regions lie at residues 549–555 (GIGGFIK) and 588–600 (NLLT…LNFP). Residues 643–833 (EGKISKIGPE…PPFLWMGYEL (191 aa)) form the Reverse transcriptase domain. The Mg(2+) site is built by aspartate 709, aspartate 784, and aspartate 785. Residues 826–834 (FLWMGYELH) are RT 'primer grip'. The short motif at 997–1013 (WETWWTEYWQATWIPEW) is the Tryptophan repeat motif element. One can recognise an RNase H type-1 domain in the interval 1033 to 1156 (IVGAETFYVD…VDKLVSAGIR (124 aa)). The Mg(2+) site is built by aspartate 1042, glutamate 1077, aspartate 1097, and aspartate 1148. Residues 1162–1203 (DGIDKAQDEHEKYHSNWRAMASDFNLPPVVAKEIVASCDKCQ) form an Integrase-type zinc finger. Residues histidine 1171, histidine 1175, cysteine 1199, and cysteine 1202 each coordinate Zn(2+). The region spanning 1213-1363 (VDCSPGIWQL…SAGERIVDII (151 aa)) is the Integrase catalytic domain. 3 residues coordinate Mg(2+): aspartate 1223, aspartate 1275, and glutamate 1311. The segment at residues 1382 to 1429 (FRVYYRDSRDPLWKGPAKLLWKGEGAVVIQDNSDIKVVPRRKAKIIRD) is a DNA-binding region (integrase-type).

As to quaternary structure, homotrimer; further assembles as hexamers of trimers. Interacts with gp41 (via C-terminus). Interacts with host CALM1; this interaction induces a conformational change in the Matrix protein, triggering exposure of the myristate group. Interacts with host AP3D1; this interaction allows the polyprotein trafficking to multivesicular bodies during virus assembly. Part of the pre-integration complex (PIC) which is composed of viral genome, matrix protein, Vpr and integrase. In terms of assembly, homodimer; the homodimer further multimerizes as homohexamers or homopentamers. Interacts with human PPIA/CYPA; This interaction stabilizes the capsid. Interacts with human NUP153. Interacts with host PDZD8; this interaction stabilizes the capsid. Interacts with monkey TRIM5; this interaction destabilizes the capsid. Homodimer, whose active site consists of two apposed aspartic acid residues. As to quaternary structure, heterodimer of p66 RT and p51 RT (RT p66/p51). Heterodimerization of RT is essential for DNA polymerase activity. The overall folding of the subdomains is similar in p66 RT and p51 RT but the spatial arrangements of the subdomains are dramatically different. In terms of assembly, homotetramer; may further associate as a homohexadecamer. Part of the pre-integration complex (PIC) which is composed of viral genome, matrix protein, Vpr and integrase. Interacts with human SMARCB1/INI1 and human PSIP1/LEDGF isoform 1. Interacts with human KPNA3; this interaction might play a role in nuclear import of the pre-integration complex. Interacts with human NUP153; this interaction might play a role in nuclear import of the pre-integration complex. Mg(2+) serves as cofactor. Post-translationally, specific enzymatic cleavages by the viral protease yield mature proteins. The protease is released by autocatalytic cleavage. The polyprotein is cleaved during and after budding, this process is termed maturation. Proteolytic cleavage of p66 RT removes the RNase H domain to yield the p51 RT subunit. Nucleocapsid protein p7 might be further cleaved after virus entry. In terms of processing, tyrosine phosphorylated presumably in the virion by a host kinase. Phosphorylation is apparently not a major regulator of membrane association. Phosphorylated possibly by host MAPK1; this phosphorylation is necessary for Pin1-mediated virion uncoating. Post-translationally, methylated by host PRMT6, impairing its function by reducing RNA annealing and the initiation of reverse transcription.

The protein localises to the host cell membrane. It localises to the host endosome. Its subcellular location is the host multivesicular body. The protein resides in the virion membrane. It is found in the host nucleus. The protein localises to the host cytoplasm. It localises to the virion. The enzyme catalyses Specific for a P1 residue that is hydrophobic, and P1' variable, but often Pro.. It carries out the reaction Endohydrolysis of RNA in RNA/DNA hybrids. Three different cleavage modes: 1. sequence-specific internal cleavage of RNA. Human immunodeficiency virus type 1 and Moloney murine leukemia virus enzymes prefer to cleave the RNA strand one nucleotide away from the RNA-DNA junction. 2. RNA 5'-end directed cleavage 13-19 nucleotides from the RNA end. 3. DNA 3'-end directed cleavage 15-20 nucleotides away from the primer terminus.. The catalysed reaction is 3'-end directed exonucleolytic cleavage of viral RNA-DNA hybrid.. It catalyses the reaction DNA(n) + a 2'-deoxyribonucleoside 5'-triphosphate = DNA(n+1) + diphosphate. Its activity is regulated as follows. The viral protease is inhibited by many synthetic protease inhibitors (PIs), such as amprenavir, atazanavir, indinavir, loprinavir, nelfinavir, ritonavir and saquinavir. RT can be inhibited either by nucleoside RT inhibitors (NRTIs) or by non nucleoside RT inhibitors (NNRTIs). NRTIs act as chain terminators, whereas NNRTIs inhibit DNA polymerization by binding a small hydrophobic pocket near the RT active site and inducing an allosteric change in this region. Classical NRTIs are abacavir, adefovir (PMEA), didanosine (ddI), lamivudine (3TC), stavudine (d4T), tenofovir (PMPA), zalcitabine (ddC), and zidovudine (AZT). Classical NNRTIs are atevirdine (BHAP U-87201E), delavirdine, efavirenz (DMP-266), emivirine (I-EBU), and nevirapine (BI-RG-587). The tritherapies used as a basic effective treatment of AIDS associate two NRTIs and one NNRTI. Use of protease inhibitors in tritherapy regimens permit more ambitious therapeutic strategies. Functionally, gag-Pol polyprotein and Gag polyprotein may regulate their own translation, by the binding genomic RNA in the 5'-UTR. At low concentration, Gag-Pol and Gag would promote translation, whereas at high concentration, the polyproteins encapsidate genomic RNA and then shut off translation. Its function is as follows. Matrix protein p17 targets Gag and Gag-pol polyproteins to the plasma membrane via a multipartite membrane-binding signal, that includes its myristoylated N-terminus. Matrix protein is part of the pre-integration complex. Implicated in the release from host cell mediated by Vpu. Binds to RNA. In terms of biological role, forms the conical core that encapsulates the genomic RNA-nucleocapsid complex in the virion. Most core are conical, with only 7% tubular. The core is constituted by capsid protein hexamer subunits. The core is disassembled soon after virion entry. Host restriction factors such as TRIM5-alpha or TRIMCyp bind retroviral capsids and cause premature capsid disassembly, leading to blocks in reverse transcription. Capsid restriction by TRIM5 is one of the factors which restricts HIV-1 to the human species. Host PIN1 apparently facilitates the virion uncoating. On the other hand, interactions with PDZD8 or CYPA stabilize the capsid. Nucleocapsid protein p7 encapsulates and protects viral dimeric unspliced genomic RNA (gRNA). Binds these RNAs through its zinc fingers. Acts as a nucleic acid chaperone which is involved in rearangement of nucleic acid secondary structure during gRNA retrotranscription. Also facilitates template switch leading to recombination. As part of the polyprotein, participates in gRNA dimerization, packaging, tRNA incorporation and virion assembly. Functionally, the aspartyl protease mediates proteolytic cleavages of Gag and Gag-Pol polyproteins during or shortly after the release of the virion from the plasma membrane. Cleavages take place as an ordered, step-wise cascade to yield mature proteins. This process is called maturation. Displays maximal activity during the budding process just prior to particle release from the cell. Also cleaves Nef and Vif, probably concomitantly with viral structural proteins on maturation of virus particles. Hydrolyzes host EIF4GI and PABP1 in order to shut off the capped cellular mRNA translation. The resulting inhibition of cellular protein synthesis serves to ensure maximal viral gene expression and to evade host immune response. Also mediates cleavage of host YTHDF3. Mediates cleavage of host CARD8, thereby activating the CARD8 inflammasome, leading to the clearance of latent HIV-1 in patient CD4(+) T-cells after viral reactivation; in contrast, HIV-1 can evade CARD8-sensing when its protease remains inactive in infected cells prior to viral budding. Its function is as follows. Reverse transcriptase/ribonuclease H (RT) is a multifunctional enzyme that converts the viral RNA genome into dsDNA in the cytoplasm, shortly after virus entry into the cell. This enzyme displays a DNA polymerase activity that can copy either DNA or RNA templates, and a ribonuclease H (RNase H) activity that cleaves the RNA strand of RNA-DNA heteroduplexes in a partially processive 3' to 5' endonucleasic mode. Conversion of viral genomic RNA into dsDNA requires many steps. A tRNA(3)-Lys binds to the primer-binding site (PBS) situated at the 5'-end of the viral RNA. RT uses the 3' end of the tRNA primer to perform a short round of RNA-dependent minus-strand DNA synthesis. The reading proceeds through the U5 region and ends after the repeated (R) region which is present at both ends of viral RNA. The portion of the RNA-DNA heteroduplex is digested by the RNase H, resulting in a ssDNA product attached to the tRNA primer. This ssDNA/tRNA hybridizes with the identical R region situated at the 3' end of viral RNA. This template exchange, known as minus-strand DNA strong stop transfer, can be either intra- or intermolecular. RT uses the 3' end of this newly synthesized short ssDNA to perform the RNA-dependent minus-strand DNA synthesis of the whole template. RNase H digests the RNA template except for two polypurine tracts (PPTs) situated at the 5'-end and near the center of the genome. It is not clear if both polymerase and RNase H activities are simultaneous. RNase H probably can proceed both in a polymerase-dependent (RNA cut into small fragments by the same RT performing DNA synthesis) and a polymerase-independent mode (cleavage of remaining RNA fragments by free RTs). Secondly, RT performs DNA-directed plus-strand DNA synthesis using the PPTs that have not been removed by RNase H as primers. PPTs and tRNA primers are then removed by RNase H. The 3' and 5' ssDNA PBS regions hybridize to form a circular dsDNA intermediate. Strand displacement synthesis by RT to the PBS and PPT ends produces a blunt ended, linear dsDNA copy of the viral genome that includes long terminal repeats (LTRs) at both ends. In terms of biological role, catalyzes viral DNA integration into the host chromosome, by performing a series of DNA cutting and joining reactions. This enzyme activity takes place after virion entry into a cell and reverse transcription of the RNA genome in dsDNA. The first step in the integration process is 3' processing. This step requires a complex comprising the viral genome, matrix protein, Vpr and integrase. This complex is called the pre-integration complex (PIC). The integrase protein removes 2 nucleotides from each 3' end of the viral DNA, leaving recessed CA OH's at the 3' ends. In the second step, the PIC enters cell nucleus. This process is mediated through integrase and Vpr proteins, and allows the virus to infect a non dividing cell. This ability to enter the nucleus is specific of lentiviruses, other retroviruses cannot and rely on cell division to access cell chromosomes. In the third step, termed strand transfer, the integrase protein joins the previously processed 3' ends to the 5' ends of strands of target cellular DNA at the site of integration. The 5'-ends are produced by integrase-catalyzed staggered cuts, 5 bp apart. A Y-shaped, gapped, recombination intermediate results, with the 5'-ends of the viral DNA strands and the 3' ends of target DNA strands remaining unjoined, flanking a gap of 5 bp. The last step is viral DNA integration into host chromosome. This involves host DNA repair synthesis in which the 5 bp gaps between the unjoined strands are filled in and then ligated. Since this process occurs at both cuts flanking the HIV genome, a 5 bp duplication of host DNA is produced at the ends of HIV-1 integration. Alternatively, Integrase may catalyze the excision of viral DNA just after strand transfer, this is termed disintegration. The polypeptide is Gag-Pol polyprotein (gag-pol) (Homo sapiens (Human)).